The following is a 54-amino-acid chain: UPF0391 membrane protein Pfl01_0044 (54 aa).

The next 2 helical transmembrane spans lie at 4-24 (WAITFLIIAIIAAVLGFGGIA) and 29-49 (GIAKILFVVFLVMFIASFFFG).

This sequence belongs to the UPF0391 family.

Its subcellular location is the cell membrane. In Pseudomonas fluorescens (strain Pf0-1), this protein is UPF0391 membrane protein Pfl01_0044.